The following is a 466-amino-acid chain: Glycine--tRNA ligase (466 aa).

The substrate site is built by arginine 105 and glutamate 168. ATP contacts are provided by residues arginine 200–glutamate 202, phenylalanine 210–phenylalanine 215, glutamate 287–leucine 288, and glycine 331–arginine 334. Phenylalanine 215–glutamate 219 is a substrate binding site. Glutamate 327–glycine 331 contacts substrate.

It belongs to the class-II aminoacyl-tRNA synthetase family. In terms of assembly, homodimer.

It localises to the cytoplasm. The enzyme catalyses tRNA(Gly) + glycine + ATP = glycyl-tRNA(Gly) + AMP + diphosphate. Functionally, catalyzes the attachment of glycine to tRNA(Gly). The chain is Glycine--tRNA ligase from Nocardia farcinica (strain IFM 10152).